The sequence spans 1024 residues: MLAVGRMEDEEGPEYGKPDFVLLDQLTMEDFMKNLELRFEKGRIYTYIGEVLVSVNPYQELPLYGPEAIAKYQGRELYERPPHLYAVANAAYKAMKRRSRDTCIVISGESGAGKTEASKHIMQYIAAVTNPSQRAEVERVKNVLLKSTCVLEAFGNARTNRNHNSSRFGKYMDINFDFKGDPVGGHIHSYLLEKSRVLKQHVGERNFHAFYQLLRGSEDQELQGLHLERNPAVYNFTRQGAGLNMGVHNALDSDEKSHQGVMEAMRIIGFSPDEVESIHRILAAILHLGNIEFVETEENGPQKGGLEVADEALVGYVAKLTATPRDLVLRTLLARTVASGGREVIEKSHTVAEASYARDACAKAMYQRLFEWVVNKINSIMEPRNRDPRCDGKDTVIGVLDIYGFEVFPVNSFEQFCINYCNEKLQQLFIQLILKQEQEEYEREGIAWQTIEYFNNATIVELVEQPHRGILAVLDEACSTAGPITDRIFLQTLDTHHRHHPHYSSRQLCPTDKTMEFGRDFQIKHYAGDVTYSVEGFIDKNRDSLFQDFKRLLYNSVDPTLRAMWPDGQQDITEVTKRPLTAGTLFKNSMVALVENLASKEPFYVRCIKPNEDKVAGRLDEAHCRHQVEYLGLLENVRVRRAGFASRQPYPRFLLRYKMTCEYTWPNHLLGSDRDAVSALLEQHGLQGDVAFGHSKLFIRSPRTLVTLEQSRARLIPIIVLLLQKAWRGTLARWHCRRLRAIYTIMRWFRRHKVRAHLIELQRRFQAARQPPLYGRDLVWPTPPAVLQPFQDTCRVLFSRWRARQLVKNIPPSDMIQIKAKVAAMGALQGLRQDWGCQRAWARDYLSSDTDNPTASHLFAEQLKALREKDGFGSVLFSSHVRKVNRFRKSRDRALLLTDRYLYKLEPGRQYRVMRAVPLEAVTGLSVTSGRDQLVVLHAQGYDDLVVCLHRSQPPLDNRIGELVGMLAAHCQGEGRTLEVRVSDCIPLSQRGARRLISVEPRPEQPEPDFQSSRSTFTLLWPSH.

The Myosin motor domain occupies 15–713 (YGKPDFVLLD…TLVTLEQSRA (699 aa)). 108–115 (GESGAGKT) contributes to the ATP binding site. Residues 590 to 612 (MVALVENLASKEPFYVRCIKPNE) form an actin-binding region. One can recognise an IQ domain in the interval 716-745 (IPIIVLLLQKAWRGTLARWHCRRLRAIYTI). A TH1 domain is found at 830–1023 (GLRQDWGCQR…RSTFTLLWPS (194 aa)). Residues 999–1024 (VEPRPEQPEPDFQSSRSTFTLLWPSH) form a disordered region.

The protein belongs to the TRAFAC class myosin-kinesin ATPase superfamily. Myosin family. Interacts with calmodulin; via its IQ motifs. As to expression, specifically expressed in hematopoietic cells. Detected in adult tissues of the immune system such as thymus, lymph nodes and spleen, but not in brain, lung, heart, liver, small intestine, testis and kidney (at protein level). Highly expressed in T-lymphocytes; constitutes the most highly expressed class I myosin in naive CD4 and CD8 T-cells. Also present in B-lymphocytes.

It localises to the cell membrane. The protein localises to the cell projection. Its subcellular location is the phagocytic cup. Unconventional myosin required during immune response for detection of rare antigen-presenting cells by regulating T-cell migration. Unconventional myosins are actin-based motor molecules with ATPase activity and serve in intracellular movements. Acts as a regulator of T-cell migration by generating membrane tension, enforcing cell-intrinsic meandering search, thereby enhancing detection of rare antigens during lymph-node surveillance, enabling pathogen eradication. Also required in B-cells, where it regulates different membrane/cytoskeleton-dependent processes. Involved in Fc-gamma receptor (Fc-gamma-R) phagocytosis. The polypeptide is Unconventional myosin-Ig (Myo1g) (Mus musculus (Mouse)).